The primary structure comprises 194 residues: Peptidyl-tRNA hydrolase (194 aa).

Tyr-19 is a tRNA binding site. Residue His-24 is the Proton acceptor of the active site. Positions 69, 71, and 117 each coordinate tRNA.

This sequence belongs to the PTH family. In terms of assembly, monomer.

The protein localises to the cytoplasm. The enzyme catalyses an N-acyl-L-alpha-aminoacyl-tRNA + H2O = an N-acyl-L-amino acid + a tRNA + H(+). Functionally, hydrolyzes ribosome-free peptidyl-tRNAs (with 1 or more amino acids incorporated), which drop off the ribosome during protein synthesis, or as a result of ribosome stalling. In terms of biological role, catalyzes the release of premature peptidyl moieties from peptidyl-tRNA molecules trapped in stalled 50S ribosomal subunits, and thus maintains levels of free tRNAs and 50S ribosomes. This chain is Peptidyl-tRNA hydrolase, found in Neorickettsia sennetsu (strain ATCC VR-367 / Miyayama) (Ehrlichia sennetsu).